Consider the following 139-residue polypeptide: Lamprin 0.9 (139 aa).

The signal sequence occupies residues 1–19 (MAAAIQALLVLALLHLATA). Tandem repeats lie at residues 42-46 (GGLGY), 47-51 (GGLGY), 52-56 (GGLGV), 57-61 (AGLGV), 62-66 (AGLGY), 67-71 (GGLGY), 92-96 (GGLGY), and 106-110 (GGLGY). Positions 42–110 (GGLGYGGLGY…YHHALGGLGY (69 aa)) are 8 X 5 AA approximate repeats.

As to quaternary structure, the polymeric lamprin chains self-aggregate to form fibers and have secondary structures particularly rich in beta-sheets and in beta-turns.

The protein resides in the secreted. It localises to the extracellular space. The protein localises to the extracellular matrix. Functionally, self-aggregating protein that is part of the soluble form of lamprin. The sequence is that of Lamprin 0.9 from Petromyzon marinus (Sea lamprey).